The following is a 606-amino-acid chain: tRNA 5-methylaminomethyl-2-thiouridine biosynthesis bifunctional protein MnmC (606 aa).

The segment at 1 to 237 (MNSNSSVQFN…KRDMLCGHYL (237 aa)) is tRNA (mnm(5)s(2)U34)-methyltransferase. The FAD-dependent cmnm(5)s(2)U34 oxidoreductase stretch occupies residues 254 to 606 (IGGGISAACS…RRISVSRFKG (353 aa)).

It in the N-terminal section; belongs to the methyltransferase superfamily. tRNA (mnm(5)s(2)U34)-methyltransferase family. This sequence in the C-terminal section; belongs to the DAO family. FAD is required as a cofactor.

It is found in the cytoplasm. It carries out the reaction 5-aminomethyl-2-thiouridine(34) in tRNA + S-adenosyl-L-methionine = 5-methylaminomethyl-2-thiouridine(34) in tRNA + S-adenosyl-L-homocysteine + H(+). Catalyzes the last two steps in the biosynthesis of 5-methylaminomethyl-2-thiouridine (mnm(5)s(2)U) at the wobble position (U34) in tRNA. Catalyzes the FAD-dependent demodification of cmnm(5)s(2)U34 to nm(5)s(2)U34, followed by the transfer of a methyl group from S-adenosyl-L-methionine to nm(5)s(2)U34, to form mnm(5)s(2)U34. This is tRNA 5-methylaminomethyl-2-thiouridine biosynthesis bifunctional protein MnmC from Idiomarina loihiensis (strain ATCC BAA-735 / DSM 15497 / L2-TR).